Reading from the N-terminus, the 421-residue chain is Gamma-glutamyl phosphate reductase (421 aa).

It belongs to the gamma-glutamyl phosphate reductase family.

Its subcellular location is the cytoplasm. It catalyses the reaction L-glutamate 5-semialdehyde + phosphate + NADP(+) = L-glutamyl 5-phosphate + NADPH + H(+). It participates in amino-acid biosynthesis; L-proline biosynthesis; L-glutamate 5-semialdehyde from L-glutamate: step 2/2. Its function is as follows. Catalyzes the NADPH-dependent reduction of L-glutamate 5-phosphate into L-glutamate 5-semialdehyde and phosphate. The product spontaneously undergoes cyclization to form 1-pyrroline-5-carboxylate. This is Gamma-glutamyl phosphate reductase from Acinetobacter baumannii (strain AYE).